The primary structure comprises 173 residues: Translation initiation factor IF-3 (173 aa).

This sequence belongs to the IF-3 family. Monomer.

The protein localises to the cytoplasm. Its function is as follows. IF-3 binds to the 30S ribosomal subunit and shifts the equilibrium between 70S ribosomes and their 50S and 30S subunits in favor of the free subunits, thus enhancing the availability of 30S subunits on which protein synthesis initiation begins. The sequence is that of Translation initiation factor IF-3 from Neisseria gonorrhoeae (strain ATCC 700825 / FA 1090).